The primary structure comprises 401 residues: Transcriptional regulator Myc-2 (401 aa).

O-linked (GlcNAc) threonine glycosylation occurs at threonine 58. Residues 76–84 carry the 9aaTAD motif; it reads EMVSEFLGD. Disordered stretches follow at residues 177–251 and 286–325; these read SSKS…SRYP and LESS…HNVL. Residues 205–230 are compositionally biased toward acidic residues; the sequence is DSEDEEEEEEEEEEEEEEEEEEEEID. Basic and acidic residues predominate over residues 233–247; the sequence is TVEKRQKRNEAEVSD. Residues 288 to 297 are compositionally biased toward low complexity; the sequence is SSSSNNSSSN. The bHLH domain maps to 317 to 369; it reads DKRRTHNVLERQRRNELKLSFFALRDEIPEVANNEKAAKVVILKKATECIHSM. The segment at 376–397 is leucine-zipper; that stretch reads LLSIKEQLRRKSEQLKHRLQQL.

As to quaternary structure, efficient DNA binding requires dimerization with another bHLH protein. Binds DNA as a heterodimer with MAX.

It localises to the nucleus. Transcription factor that binds DNA in a non-specific manner, yet also specifically recognizes the core sequence 5'-CAC[GA]TG-3'. Activates the transcription of growth-related genes. The polypeptide is Transcriptional regulator Myc-2 (mycb) (Cyprinus carpio (Common carp)).